The sequence spans 65 residues: Large ribosomal subunit protein uL29 (65 aa).

This sequence belongs to the universal ribosomal protein uL29 family.

The sequence is that of Large ribosomal subunit protein uL29 from Syntrophus aciditrophicus (strain SB).